Here is a 1715-residue protein sequence, read N- to C-terminus: Pentafunctional AROM polypeptide (1715 aa).

Residues 1–17 show a composition bias toward polar residues; that stretch reads MTSTASAQQPVLRTKTP. The segment at 1–26 is disordered; that stretch reads MTSTASAQQPVLRTKTPSYHAPPSTD. Residues 1-421 are 3-dehydroquinate synthase; sequence MTSTASAQQP…VQNMASTVSD (421 aa). NAD(+)-binding positions include 71–73, 112–115, 143–145, and D148; these read DQN, EASK, and GGV. R159 provides a ligand contact to 7-phospho-2-dehydro-3-deoxy-D-arabino-heptonate. 168 to 169 is an NAD(+) binding site; sequence TT. Residues D175 and K181 each coordinate 7-phospho-2-dehydro-3-deoxy-D-arabino-heptonate. K190 provides a ligand contact to NAD(+). N191 provides a ligand contact to 7-phospho-2-dehydro-3-deoxy-D-arabino-heptonate. NAD(+) is bound by residues 208-211 and N219; that span reads WLKT. Residue E223 coordinates Zn(2+). 7-phospho-2-dehydro-3-deoxy-D-arabino-heptonate-binding positions include 223–226 and K287; that span reads EVVK. The Proton acceptor; for 3-dehydroquinate synthase activity role is filled by E297. 7-phospho-2-dehydro-3-deoxy-D-arabino-heptonate contacts are provided by residues 301 to 305 and H308; that span reads RNLVN. H308 contacts Zn(2+). The active-site Proton acceptor; for 3-dehydroquinate synthase activity is H312. Positions 324 and 393 each coordinate 7-phospho-2-dehydro-3-deoxy-D-arabino-heptonate. Zn(2+) is bound at residue H324. The EPSP synthase stretch occupies residues 434-895; that stretch reads VTPIHEQPNK…WDDLERKLGI (462 aa). C877 acts as the For EPSP synthase activity in catalysis. Residues 948-1165 form a shikimate kinase region; it reads HATIICIGMR…KGGRRTYFLS (218 aa). Position 955–962 (955–962) interacts with ATP; it reads GMRASGKT. Positions 1166 to 1389 are 3-dehydroquinase; that stretch reads LTFPDVVPKL…AAPGQLSFRQ (224 aa). H1292 (proton acceptor; for 3-dehydroquinate dehydratase activity) is an active-site residue. The Schiff-base intermediate with substrate; for 3-dehydroquinate dehydratase activity role is filled by K1320. Residues 1402 to 1715 are shikimate dehydrogenase; it reads ARRFALFGSP…AAWDVYLQRC (314 aa).

The protein in the N-terminal section; belongs to the sugar phosphate cyclases superfamily. Dehydroquinate synthase family. It in the 2nd section; belongs to the EPSP synthase family. This sequence in the 3rd section; belongs to the shikimate kinase family. In the 4th section; belongs to the type-I 3-dehydroquinase family. The protein in the C-terminal section; belongs to the shikimate dehydrogenase family. Homodimer. The cofactor is Zn(2+).

The protein resides in the cytoplasm. The enzyme catalyses 7-phospho-2-dehydro-3-deoxy-D-arabino-heptonate = 3-dehydroquinate + phosphate. It carries out the reaction 3-dehydroquinate = 3-dehydroshikimate + H2O. It catalyses the reaction shikimate + NADP(+) = 3-dehydroshikimate + NADPH + H(+). The catalysed reaction is shikimate + ATP = 3-phosphoshikimate + ADP + H(+). The enzyme catalyses 3-phosphoshikimate + phosphoenolpyruvate = 5-O-(1-carboxyvinyl)-3-phosphoshikimate + phosphate. It participates in metabolic intermediate biosynthesis; chorismate biosynthesis; chorismate from D-erythrose 4-phosphate and phosphoenolpyruvate: step 2/7. Its pathway is metabolic intermediate biosynthesis; chorismate biosynthesis; chorismate from D-erythrose 4-phosphate and phosphoenolpyruvate: step 3/7. The protein operates within metabolic intermediate biosynthesis; chorismate biosynthesis; chorismate from D-erythrose 4-phosphate and phosphoenolpyruvate: step 4/7. It functions in the pathway metabolic intermediate biosynthesis; chorismate biosynthesis; chorismate from D-erythrose 4-phosphate and phosphoenolpyruvate: step 5/7. It participates in metabolic intermediate biosynthesis; chorismate biosynthesis; chorismate from D-erythrose 4-phosphate and phosphoenolpyruvate: step 6/7. Its function is as follows. The AROM polypeptide catalyzes 5 consecutive enzymatic reactions in prechorismate polyaromatic amino acid biosynthesis. The sequence is that of Pentafunctional AROM polypeptide from Mycosarcoma maydis (Corn smut fungus).